The primary structure comprises 222 residues: UPF0316 protein Mboo_0791 (222 aa).

3 helical membrane-spanning segments follow: residues 25 to 45 (FFLFTPDILNYIVLPVLIFLA), 67 to 87 (LAPVIAFFEIIIWLLAIVGVL), and 93 to 113 (IAYFLAYAFGFALGTYVGLVI).

It belongs to the UPF0316 family.

It is found in the cell membrane. The sequence is that of UPF0316 protein Mboo_0791 from Methanoregula boonei (strain DSM 21154 / JCM 14090 / 6A8).